Reading from the N-terminus, the 187-residue chain is Peptidyl-tRNA hydrolase (187 aa).

Tyr-14 is a binding site for tRNA. The Proton acceptor role is filled by His-19. The tRNA site is built by Tyr-60, Asn-62, and Asn-108.

The protein belongs to the PTH family. Monomer.

The protein localises to the cytoplasm. The enzyme catalyses an N-acyl-L-alpha-aminoacyl-tRNA + H2O = an N-acyl-L-amino acid + a tRNA + H(+). Hydrolyzes ribosome-free peptidyl-tRNAs (with 1 or more amino acids incorporated), which drop off the ribosome during protein synthesis, or as a result of ribosome stalling. Its function is as follows. Catalyzes the release of premature peptidyl moieties from peptidyl-tRNA molecules trapped in stalled 50S ribosomal subunits, and thus maintains levels of free tRNAs and 50S ribosomes. The sequence is that of Peptidyl-tRNA hydrolase from Mycoplasmopsis synoviae (strain 53) (Mycoplasma synoviae).